The chain runs to 459 residues: Eukaryotic translation initiation factor 3 subunit M (459 aa).

The PCI domain occupies 207 to 384 (LDWAQTHVVD…SEFLVHRATY (178 aa)). The tract at residues 431–459 (AAAEGEKGDKNNKGPSERRRAPQEIAAAE) is disordered. The span at 434–452 (EGEKGDKNNKGPSERRRAP) shows a compositional bias: basic and acidic residues.

Belongs to the eIF-3 subunit M family. Component of the eukaryotic translation initiation factor 3 (eIF-3) complex.

Its subcellular location is the cytoplasm. Component of the eukaryotic translation initiation factor 3 (eIF-3) complex, which is involved in protein synthesis of a specialized repertoire of mRNAs and, together with other initiation factors, stimulates binding of mRNA and methionyl-tRNAi to the 40S ribosome. The eIF-3 complex specifically targets and initiates translation of a subset of mRNAs involved in cell proliferation. This Emericella nidulans (strain FGSC A4 / ATCC 38163 / CBS 112.46 / NRRL 194 / M139) (Aspergillus nidulans) protein is Eukaryotic translation initiation factor 3 subunit M.